The following is a 358-amino-acid chain: Peptide chain release factor 1 (358 aa).

Gln233 is modified (N5-methylglutamine).

The protein belongs to the prokaryotic/mitochondrial release factor family. Methylated by PrmC. Methylation increases the termination efficiency of RF1.

It localises to the cytoplasm. In terms of biological role, peptide chain release factor 1 directs the termination of translation in response to the peptide chain termination codons UAG and UAA. The sequence is that of Peptide chain release factor 1 from Clostridium botulinum (strain Loch Maree / Type A3).